The following is a 760-amino-acid chain: Serine/threonine-protein kinase PknG (760 aa).

Positions 1 to 31 (MTSPENPDLPDADDAYVDSGPGTQPASLEDL) are disordered. A Protein kinase domain is found at 161–403 (YEIKGCIAHG…SAEEMSSQLL (243 aa)). ATP-binding positions include 167-175 (IAHGGLGWV) and Lys191. Residue Asp286 is the Proton acceptor of the active site.

The protein belongs to the protein kinase superfamily. Ser/Thr protein kinase family. As to quaternary structure, interacts with GarA in vitro.

The catalysed reaction is L-seryl-[protein] + ATP = O-phospho-L-seryl-[protein] + ADP + H(+). The enzyme catalyses L-threonyl-[protein] + ATP = O-phospho-L-threonyl-[protein] + ADP + H(+). This Mycolicibacterium smegmatis (strain ATCC 700084 / mc(2)155) (Mycobacterium smegmatis) protein is Serine/threonine-protein kinase PknG (pknG).